Here is a 400-residue protein sequence, read N- to C-terminus: Multidrug resistance protein 2 (400 aa).

The next 11 membrane-spanning stretches (helical) occupy residues 11-31 (IFIILLSNIFVAFLGIGLIIP), 46-66 (TMGYLVAAFAISQLITSPFAG), 78-98 (IILGLLIFSLSELIFGLGTHV), 106-126 (ILGGVSAAFIMPAVTAYVADI), 142-162 (AISTGFIIGPGAGGFIAGFGI), 164-184 (MPFFFASAIALIAAVTSVFIL), 213-233 (IHPVYFIAFIIVFVMAFGLSA), 253-273 (IAAIITISSIVAVVIQVLLFG), 297-317 (FVSTVMSGFLTVLLVTCFIFL), 346-366 (STYTSLGNIFGPALGGILFDL), and 368-388 (IHYPFLFAGFVMIVGLGLTMV).

Belongs to the major facilitator superfamily. TCR/Tet family.

It localises to the cell membrane. Functionally, energy-dependent efflux pump responsible for decreased drug accumulation in multi-drug-resistant cells. Probably uses a transmembrane proton gradient as the energy source. Causes the efflux of a variety of toxic substances, including such structurally diverse compounds as ethidium bromide, rhodamine and acridine dyes, tetraphenylphosphonium, puromycin, chloramphenicol, doxorubicin, and fluoroquinolone antibiotics. The chain is Multidrug resistance protein 2 (blt) from Bacillus subtilis (strain 168).